The chain runs to 38 residues: Turripeptide GpIAa (38 aa).

Belongs to the turripeptide family. As to expression, expressed by the venom duct.

It localises to the secreted. The protein is Turripeptide GpIAa of Cryptogemma periscelida (Atlantic gem-turris).